Consider the following 158-residue polypeptide: Transcription elongation factor GreB (158 aa).

A coiled-coil region spans residues 53–75 (KRRLREIDRRVRFLTKRLEVLQI).

This sequence belongs to the GreA/GreB family. GreB subfamily.

Its function is as follows. Necessary for efficient RNA polymerase transcription elongation past template-encoded arresting sites. The arresting sites in DNA have the property of trapping a certain fraction of elongating RNA polymerases that pass through, resulting in locked ternary complexes. Cleavage of the nascent transcript by cleavage factors such as GreA or GreB allows the resumption of elongation from the new 3'terminus. GreB releases sequences of up to 9 nucleotides in length. This chain is Transcription elongation factor GreB, found in Pasteurella multocida (strain Pm70).